The primary structure comprises 204 residues: Large ribosomal subunit protein eL15 (204 aa).

Belongs to the eukaryotic ribosomal protein eL15 family.

The sequence is that of Large ribosomal subunit protein eL15 (RpL15) from Chironomus tentans (Midge).